We begin with the raw amino-acid sequence, 448 residues long: Gametocyte surface protein P45/48 (448 aa).

An N-terminal signal peptide occupies residues 1 to 27; it reads MMLYISAKKAQVAFILYIVLVLRIISG. Positions 45-182 constitute a 6-Cys 1 domain; it reads IGYKCNFSNE…AMVHVRVLKY (138 aa). 2 disulfide bridges follow: C49-C71 and C102-C156. N-linked (GlcNAc...) asparagine glycans are attached at residues N50, N131, N190, N204, N254, N299, and N303. In terms of domain architecture, 6-Cys 2 spans 294–426; it reads VIHGCNFSSN…KSAYMTVTID (133 aa). Intrachain disulfides connect C298–C327, C344–C412, and C352–C410. D426 is lipidated: GPI-anchor amidated aspartate. Residues 427 to 448 constitute a propeptide, removed in mature form; that stretch reads SAYYGFLAKTFIFLIVAILLYI.

Heterodimer; heterodimerizes with PF230.

It localises to the cell surface. The protein localises to the cell membrane. In terms of biological role, gametocyte surface protein required for male fertility. This Plasmodium falciparum (isolate 3D7) protein is Gametocyte surface protein P45/48 (PF45/48).